The following is a 220-amino-acid chain: Putative glutathione S-transferase C460.02c (220 aa).

Residues 1–81 (MFLGTIYSFK…YFYEKGKHND (81 aa)) enclose the GST N-terminal domain. One can recognise a GST C-terminal domain in the interval 89-216 (NEIEEAEMLK…YPLELPLTVT (128 aa)).

It belongs to the GST superfamily.

Its subcellular location is the cytoplasm. It catalyses the reaction RX + glutathione = an S-substituted glutathione + a halide anion + H(+). Involved in the oxidative stress response and detoxification. In Schizosaccharomyces pombe (strain 972 / ATCC 24843) (Fission yeast), this protein is Putative glutathione S-transferase C460.02c.